The primary structure comprises 371 residues: MPHQKILMLFGLLPVATNISTWWNFGSMLLTCSMIQVLTGFFLAVHYTANINLAFSSIVHIMRDVPCGWMVQNLHAIGASMFFICIYIHIARGLYYGSYLNKETWLSGTTLLIMLMATAFFGYVLPWGQMSFWAATVITNLLTAIPYLGGTMTTWLWGGFAINDPTLTRFFALHFILPFGIISLSSLHVLLLHEEGSSNPLGTNSDIDKIPFHPYHTMKDLLMLTTTLTLLLMTISFFPDIFNDPENFSKANPLVTPQHIKPEWYFLFAYGILRSIPNKLGGALALAMSIMILFTVPFIHTSKLRSMTFRPLMQLMFWTFTSTFVLITWAATKPVEPPFISISQVASIIYFTFFISNPILGWAENKIMKNT.

4 helical membrane-spanning segments follow: residues 25–45 (FGSMLLTCSMIQVLTGFFLAV), 69–90 (WMVQNLHAIGASMFFICIYIHI), 105–125 (WLSGTTLLIMLMATAFFGYVL), and 170–190 (FFALHFILPFGIISLSSLHVL). Residues His-75 and His-89 each contribute to the heme b site. Residues His-174 and His-188 each contribute to the heme b site. An a ubiquinone-binding site is contributed by His-193. The next 4 membrane-spanning stretches (helical) occupy residues 218–238 (MKDLLMLTTTLTLLLMTISFF), 280–300 (LGGALALAMSIMILFTVPFIH), 312–332 (LMQLMFWTFTSTFVLITWAAT), and 339–358 (FISISQVASIIYFTFFISNP).

It belongs to the cytochrome b family. The cytochrome bc1 complex contains 3 respiratory subunits (MT-CYB, CYC1 and UQCRFS1), 2 core proteins (UQCRC1 and UQCRC2) and probably 6 low-molecular weight proteins. The cofactor is heme b.

Its subcellular location is the mitochondrion inner membrane. Component of the ubiquinol-cytochrome c reductase complex (complex III or cytochrome b-c1 complex) that is part of the mitochondrial respiratory chain. The b-c1 complex mediates electron transfer from ubiquinol to cytochrome c. Contributes to the generation of a proton gradient across the mitochondrial membrane that is then used for ATP synthesis. In Boa constrictor (Boa), this protein is Cytochrome b (MT-CYB).